Consider the following 102-residue polypeptide: Large ribosomal subunit protein bL21 (102 aa).

The protein belongs to the bacterial ribosomal protein bL21 family. In terms of assembly, part of the 50S ribosomal subunit. Contacts protein L20.

Its function is as follows. This protein binds to 23S rRNA in the presence of protein L20. The polypeptide is Large ribosomal subunit protein bL21 (Macrococcus caseolyticus (strain JCSC5402) (Macrococcoides caseolyticum)).